The sequence spans 445 residues: Probable aminotransferase TAT3 (445 aa).

Belongs to the class-I pyridoxal-phosphate-dependent aminotransferase family. The cofactor is pyridoxal 5'-phosphate. Expressed in roots, leaves and cauline leaves.

This Arabidopsis thaliana (Mouse-ear cress) protein is Probable aminotransferase TAT3 (TAT3).